The chain runs to 309 residues: Aspartate carbamoyltransferase catalytic subunit (309 aa).

The carbamoyl phosphate site is built by Arg55 and Thr56. An L-aspartate-binding site is contributed by Lys85. 3 residues coordinate carbamoyl phosphate: Arg106, His135, and Gln138. Residues Arg168 and Arg230 each coordinate L-aspartate. The carbamoyl phosphate site is built by Leu268 and Pro269.

The protein belongs to the aspartate/ornithine carbamoyltransferase superfamily. ATCase family. Heterododecamer (2C3:3R2) of six catalytic PyrB chains organized as two trimers (C3), and six regulatory PyrI chains organized as three dimers (R2).

The catalysed reaction is carbamoyl phosphate + L-aspartate = N-carbamoyl-L-aspartate + phosphate + H(+). It functions in the pathway pyrimidine metabolism; UMP biosynthesis via de novo pathway; (S)-dihydroorotate from bicarbonate: step 2/3. Functionally, catalyzes the condensation of carbamoyl phosphate and aspartate to form carbamoyl aspartate and inorganic phosphate, the committed step in the de novo pyrimidine nucleotide biosynthesis pathway. This Vibrio cholerae serotype O1 (strain ATCC 39315 / El Tor Inaba N16961) protein is Aspartate carbamoyltransferase catalytic subunit.